We begin with the raw amino-acid sequence, 510 residues long: GMP synthase [glutamine-hydrolyzing] (510 aa).

In terms of domain architecture, Glutamine amidotransferase type-1 spans 5-195 (LVFIIDFGGQ…LFNICELKGD (191 aa)). The active-site Nucleophile is the Cys-82. Active-site residues include His-169 and Glu-171. The 190-residue stretch at 196 to 385 (WSVTSFAEEK…LGIPHKLVWR (190 aa)) folds into the GMPS ATP-PPase domain. 223-229 (SGGVDSS) contacts ATP.

As to quaternary structure, homodimer.

It catalyses the reaction XMP + L-glutamine + ATP + H2O = GMP + L-glutamate + AMP + diphosphate + 2 H(+). It functions in the pathway purine metabolism; GMP biosynthesis; GMP from XMP (L-Gln route): step 1/1. Functionally, catalyzes the synthesis of GMP from XMP. The polypeptide is GMP synthase [glutamine-hydrolyzing] (Clostridium tetani (strain Massachusetts / E88)).